A 210-amino-acid chain; its full sequence is Large ribosomal subunit protein uL3 (210 aa).

The segment at 119–151 is disordered; it reads FQGAIKRHGQSRGPMSHGSRYHRRPGSMGPVAP.

This sequence belongs to the universal ribosomal protein uL3 family. As to quaternary structure, part of the 50S ribosomal subunit. Forms a cluster with proteins L14 and L19.

In terms of biological role, one of the primary rRNA binding proteins, it binds directly near the 3'-end of the 23S rRNA, where it nucleates assembly of the 50S subunit. The protein is Large ribosomal subunit protein uL3 of Bacillus cytotoxicus (strain DSM 22905 / CIP 110041 / 391-98 / NVH 391-98).